Here is a 353-residue protein sequence, read N- to C-terminus: Putative glycosyltransferase TagX (353 aa).

This sequence belongs to the glycosyltransferase 2 family.

The polypeptide is Putative glycosyltransferase TagX (tagX) (Staphylococcus aureus (strain Mu50 / ATCC 700699)).